Here is a 577-residue protein sequence, read N- to C-terminus: Zona pellucida sperm-binding protein 3 receptor (577 aa).

Positions 1 to 32 (MTAWSLHELWKTSHSTLFQVTLATVLMAPVLG) are cleaved as a signal peptide. Sushi domains follow at residues 33 to 92 (DCGP…FCAR), 93 to 154 (KRCK…ECVI), 155 to 219 (ATCE…ACEK), 220 to 279 (IVCH…TCEP), 280 to 346 (NGCI…GCER), and 347 to 412 (VCCP…SCEA). Cystine bridges form between cysteine 34–cysteine 78, cysteine 64–cysteine 90, cysteine 95–cysteine 136, cysteine 122–cysteine 152, cysteine 157–cysteine 200, cysteine 186–cysteine 217, cysteine 222–cysteine 264, cysteine 250–cysteine 277, cysteine 282–cysteine 332, cysteine 316–cysteine 344, cysteine 349–cysteine 397, and cysteine 382–cysteine 410. N-linked (GlcNAc...) asparagine glycans are attached at residues asparagine 72 and asparagine 81. N-linked (GlcNAc...) asparagine glycans are attached at residues asparagine 144, asparagine 195, and asparagine 204. A glycan (N-linked (GlcNAc...) asparagine) is linked at asparagine 335. 7 N-linked (GlcNAc...) asparagine glycosylation sites follow: asparagine 426, asparagine 431, asparagine 434, asparagine 443, asparagine 462, asparagine 475, and asparagine 497. The Sushi 7 domain maps to 451–509 (AVCPKPEIINGNLSVEKEIYAEMENITIQCDSGYDLVGSSNIICLENRTWYPDIPFCIM). 2 disulfides stabilise this stretch: cysteine 453–cysteine 494 and cysteine 480–cysteine 507.

As to quaternary structure, homomultimer; disulfide-linked. Glycosylated. In terms of tissue distribution, testis specific.

Its subcellular location is the cytoplasmic vesicle. The protein localises to the secretory vesicle. The protein resides in the acrosome lumen. In terms of biological role, binds to ZP3 glycoprotein in egg zona pellucida. Probably involved in interactions between sperm acrosome and egg zona pellucida during and immediately following the acrosome reaction. This chain is Zona pellucida sperm-binding protein 3 receptor (Zp3r), found in Rattus norvegicus (Rat).